The sequence spans 145 residues: Protein SprT-like (145 aa).

Residues 5-140 (DYVREVSLAD…ACGRCHGRLI (136 aa)) form the SprT-like domain. H64 serves as a coordination point for Zn(2+). The active site involves E65. Residue H68 coordinates Zn(2+).

It belongs to the SprT family. It depends on Zn(2+) as a cofactor.

The protein resides in the cytoplasm. In Streptococcus equi subsp. zooepidemicus (strain MGCS10565), this protein is Protein SprT-like.